Reading from the N-terminus, the 384-residue chain is O-phospho-L-seryl-tRNA:Cys-tRNA synthase 1 (384 aa).

Pyridoxal 5'-phosphate contacts are provided by residues 88-89 (AR), Asn-195, and 218-220 (SGH). Residue Lys-221 is modified to N6-(pyridoxal phosphate)lysine.

It belongs to the SepCysS family. Homodimer. Interacts with SepRS. Requires pyridoxal 5'-phosphate as cofactor.

The catalysed reaction is O-phospho-L-seryl-tRNA(Cys) + hydrogen sulfide + H(+) = L-cysteinyl-tRNA(Cys) + phosphate. Converts O-phospho-L-seryl-tRNA(Cys) (Sep-tRNA(Cys)) to L-cysteinyl-tRNA(Cys) (Cys-tRNA(Cys)). The chain is O-phospho-L-seryl-tRNA:Cys-tRNA synthase 1 from Methanocella arvoryzae (strain DSM 22066 / NBRC 105507 / MRE50).